The primary structure comprises 410 residues: uncharacterized protein (410 aa).

11–39 (VLVIGGGPSGTALSAELAARGLDVQQLAP) is an NAD(+) binding site.

This sequence belongs to the lycopene cyclase family.

This is an uncharacterized protein from Deinococcus radiodurans (strain ATCC 13939 / DSM 20539 / JCM 16871 / CCUG 27074 / LMG 4051 / NBRC 15346 / NCIMB 9279 / VKM B-1422 / R1).